The primary structure comprises 257 residues: 5-oxoprolinase subunit A (257 aa).

The protein belongs to the LamB/PxpA family. Forms a complex composed of PxpA, PxpB and PxpC.

It carries out the reaction 5-oxo-L-proline + ATP + 2 H2O = L-glutamate + ADP + phosphate + H(+). Catalyzes the cleavage of 5-oxoproline to form L-glutamate coupled to the hydrolysis of ATP to ADP and inorganic phosphate. In Halalkalibacterium halodurans (strain ATCC BAA-125 / DSM 18197 / FERM 7344 / JCM 9153 / C-125) (Bacillus halodurans), this protein is 5-oxoprolinase subunit A.